A 485-amino-acid polypeptide reads, in one-letter code: Putative ATP-dependent RNA helicase ste13 (485 aa).

A disordered region spans residues 16–38 (DRESFKGQMKAQPVDMRPKTEDV). The short motif at 44-72 (TEFEDYYLKRELLMGIFEAGFERPSPIQE) is the Q motif element. The Helicase ATP-binding domain maps to 75 to 245 (IPIALSGRDI…DKHLNKPYEI (171 aa)). 88 to 95 (AKNGTGKT) contributes to the ATP binding site. Residues 193–196 (DEAD) carry the DEAD box motif. Residues 255-415 (GVTQYYAFVD…PIPPSIDPSL (161 aa)) enclose the Helicase C-terminal domain. The interval 437-485 (LAAQQAKGQEGYHNRPNNNRGGHPRGGGNRGGYRQSNRQPRYRGQQKAD) is disordered.

The protein belongs to the DEAD box helicase family. DDX6/DHH1 subfamily.

It is found in the cytoplasm. The protein resides in the P-body. It catalyses the reaction ATP + H2O = ADP + phosphate + H(+). Its function is as follows. ATP-dependent RNA helicase involved in mRNA turnover, and more specifically in mRNA decapping. Is involved in G1/S DNA-damage checkpoint recovery, probably through the regulation of the translational status of a subset of mRNAs. May also have a role in translation and mRNA nuclear export. The polypeptide is Putative ATP-dependent RNA helicase ste13 (ste13) (Schizosaccharomyces pombe (strain 972 / ATCC 24843) (Fission yeast)).